A 336-amino-acid chain; its full sequence is DNA-directed RNA polymerase subunit alpha (336 aa).

The tract at residues 1–234 (MIEFVIPKKL…NHFKIVTEGL (234 aa)) is alpha N-terminal domain (alpha-NTD). Positions 269 to 336 (VYNRKIDELE…KFGLELRKGE (68 aa)) are alpha C-terminal domain (alpha-CTD).

This sequence belongs to the RNA polymerase alpha chain family. Homodimer. The RNAP catalytic core consists of 2 alpha, 1 beta, 1 beta' and 1 omega subunit. When a sigma factor is associated with the core the holoenzyme is formed, which can initiate transcription.

The catalysed reaction is RNA(n) + a ribonucleoside 5'-triphosphate = RNA(n+1) + diphosphate. Functionally, DNA-dependent RNA polymerase catalyzes the transcription of DNA into RNA using the four ribonucleoside triphosphates as substrates. This is DNA-directed RNA polymerase subunit alpha from Thermotoga petrophila (strain ATCC BAA-488 / DSM 13995 / JCM 10881 / RKU-1).